A 931-amino-acid chain; its full sequence is Netrin receptor UNC5C (931 aa).

An N-terminal signal peptide occupies residues 1-40; the sequence is MRKGLRATAARCGLGLGYLLQMLVLPALALLSASGTGSAA. The Extracellular portion of the chain corresponds to 41–380; it reads QDDDFFHELP…APDSDDVALY (340 aa). Positions 62-159 constitute an Ig-like domain; the sequence is PHFLIEPEEA…AGTTKSRKAY (98 aa). 9 disulfide bridges follow: Cys-83–Cys-144, Cys-95–Cys-142, Cys-188–Cys-239, Cys-272–Cys-309, Cys-276–Cys-313, Cys-287–Cys-299, Cys-328–Cys-362, Cys-332–Cys-367, and Cys-340–Cys-352. The 96-residue stretch at 161 to 256 folds into the Ig-like C2-type domain; sequence RIAYLRKTFE…KRKSTTATVI (96 aa). A glycan (N-linked (GlcNAc...) asparagine) is linked at Asn-236. TSP type-1 domains are found at residues 260-314 and 316-368; these read NGGW…TLCP and DGRW…GLCM. The N-linked (GlcNAc...) asparagine glycan is linked to Asn-361. Residues 381–401 traverse the membrane as a helical segment; that stretch reads VGIVIAVIVCLAISVVVALFV. The Cytoplasmic segment spans residues 402 to 931; sequence YRKNHRDFES…VVSLAAEGQY (530 aa). The segment at 402–931 is required for netrin-mediated axon repulsion of neuronal growth cones; sequence YRKNHRDFES…VVSLAAEGQY (530 aa). Position 502 is a phosphoserine (Ser-502). The ZU5 domain maps to 530 to 673; it reads CTAFGSFNSL…LSTYALVGHS (144 aa). A Phosphotyrosine modification is found at Tyr-568. Positions 694–712 are interaction with DCC; sequence SLEYSIRVYCLDDTQDALK. Positions 850 to 929 constitute a Death domain; it reads QKLCSSLDAP…ETVVSLAAEG (80 aa).

It belongs to the unc-5 family. As to quaternary structure, interacts with DCC (via cytoplasmic domain). Interacts (tyrosine phosphorylated form) with PTPN11. Interacts (via extracellular domain) with FLRT3 (via extracellular domain). Interacts (via Ig-like C2-type domain) with DSCAM (via extracellular domain). Interacts (via death domain) with DAPK1. Interacts (via cytoplasmic domain) with TUBB3; this interaction is decreased by NTN1/Netrin-1. Post-translationally, proteolytically cleaved by caspases during apoptosis. The cleavage does not take place when the receptor is associated with netrin ligand. Its cleavage by caspases is required to induce apoptosis. In terms of processing, phosphorylated on different cytoplasmic tyrosine residues. Phosphorylation of Tyr-568 leads to an interaction with PTPN11 phosphatase, suggesting that its activity is regulated by phosphorylation/dephosphorylation. Tyrosine phosphorylation is netrin-dependent. In terms of tissue distribution, mainly expressed in brain. Expressed in temporal lobe cortical neurons and in neurons of the hippocampal pyramidal layer. Also expressed in kidney. Not expressed in developing or adult lung.

The protein resides in the cell membrane. The protein localises to the cell surface. It localises to the synapse. It is found in the synaptosome. Its subcellular location is the cell projection. The protein resides in the axon. The protein localises to the dendrite. It localises to the growth cone. It is found in the lamellipodium. Its subcellular location is the filopodium. In terms of biological role, receptor for netrin required for axon guidance. Mediates axon repulsion of neuronal growth cones in the developing nervous system upon ligand binding. NTN1/Netrin-1 binding might cause dissociation of UNC5C from polymerized TUBB3 in microtubules and thereby lead to increased microtubule dynamics and axon repulsion. Axon repulsion in growth cones may also be caused by its association with DCC that may trigger signaling for repulsion. Might also collaborate with DSCAM in NTN1-mediated axon repulsion independently of DCC. Also involved in corticospinal tract axon guidance independently of DCC. Involved in dorsal root ganglion axon projection towards the spinal cord. It also acts as a dependence receptor required for apoptosis induction when not associated with netrin ligand. In Homo sapiens (Human), this protein is Netrin receptor UNC5C (UNC5C).